The following is a 131-amino-acid chain: Small ribosomal subunit protein uS8 (131 aa).

The protein belongs to the universal ribosomal protein uS8 family. In terms of assembly, part of the 30S ribosomal subunit. Contacts proteins S5 and S12.

Functionally, one of the primary rRNA binding proteins, it binds directly to 16S rRNA central domain where it helps coordinate assembly of the platform of the 30S subunit. This is Small ribosomal subunit protein uS8 from Erythrobacter litoralis (strain HTCC2594).